We begin with the raw amino-acid sequence, 855 residues long: Sucrose synthase 7 (855 aa).

The interval 279-758 (SIFNIVIFSI…GLQRIYECYT (480 aa)) is GT-B glycosyltransferase.

It belongs to the glycosyltransferase 1 family. Plant sucrose synthase subfamily. As to expression, predominantly expressed in roots, flowers and immature seeds.

The protein resides in the cytoplasm. It localises to the membrane. The catalysed reaction is an NDP-alpha-D-glucose + D-fructose = a ribonucleoside 5'-diphosphate + sucrose + H(+). Functionally, sucrose-cleaving enzyme that provides UDP-glucose and fructose for various metabolic pathways. This is Sucrose synthase 7 (SUS7) from Oryza sativa subsp. japonica (Rice).